Here is a 306-residue protein sequence, read N- to C-terminus: ADP-polyphosphate phosphotransferase 2 (306 aa).

The protein belongs to the polyphosphate kinase 2 (PPK2) family. Class I subfamily.

It carries out the reaction [phosphate](n) + ATP = [phosphate](n+1) + ADP. It catalyses the reaction [phosphate](n) + GTP = [phosphate](n+1) + GDP. In terms of biological role, uses inorganic polyphosphate (polyP) as a donor to convert ADP to ATP. Can also convert GDP to GTP, with lower efficiency. The protein is ADP-polyphosphate phosphotransferase 2 of Rhizobium meliloti (strain 1021) (Ensifer meliloti).